Consider the following 512-residue polypeptide: Acid-sensing ion channel 2 (512 aa).

The Cytoplasmic segment spans residues 1 to 37 (MDLKESPSEGSLQPSSIQIFANTSTLHGIRHIFVYGP). Phosphoserine is present on residues serine 8 and serine 11. The chain crosses the membrane as a helical span at residues 38–58 (LTIRRVLWAVAFVGSLGLLLV). The Extracellular portion of the chain corresponds to 59 to 427 (ESSERVSYYF…EQKKAYEVAA (369 aa)). 6 disulfides stabilise this stretch: cysteine 92–cysteine 193, cysteine 289–cysteine 364, cysteine 307–cysteine 360, cysteine 311–cysteine 358, cysteine 320–cysteine 342, and cysteine 322–cysteine 334. N-linked (GlcNAc...) asparagine glycosylation is found at asparagine 365 and asparagine 392. A helical membrane pass occupies residues 428 to 448 (LLGDIGGQMGLFIGASLLTIL). The GAS motif; ion selectivity filter signature appears at 441–443 (GAS). Over 449 to 512 (ELFDYIYELI…ALGTLEEIAC (64 aa)) the chain is Cytoplasmic.

This sequence belongs to the amiloride-sensitive sodium channel (TC 1.A.6) family. ASIC2 subfamily. Can form homotrimers. Heterotrimer; forms functional heterotrimers producing channel with different properties. Forms heterotrimers with ASIC1; while ASIC1 determines current amplitude, ASIC2 influences the properties of the current. Forms heterotrimers with ASIC3; resulting in channels with distinct properties. Interacts with STOM; STOM regulates the gating of ASIC2-containing channels. Interacts with PICK1; promotes ASIC3 phosphorylation by PKC and activation of ASIC2/ASIC3 heterotrimers. As to expression, expressed in sciatic nerve and dorsal root ganglion (DRG) (at protein level). Both isoforms display the same expression pattern except in DRG where isoform 2 is more abundantly expressed. Widely distributed throughout the brain. Highly expressed in the main olfactory bulb, neo- and allo-cortical regions, hippocampal formation, habenula, basolateral amygdaloid nuclei, and cerebellum. In the olfactory system, expressed in the glomerular cell layer, the internal granular layer, and the mitral and internal plexiform cell layers. Within the glomerular layer, restricted to the periglomerular cells. In the neocortex, strongly expressed in the large pyramidal neurons in all cortical layers as well as in the oligo-, astro-, or micro-glia cells. In the hippocampal formation, expressed in dentate granule cells and hilar neurons, as well as in pyramidal cells of CA1-CA3 subfields. Expressed in stratum oriens and radiatum of all subfields. Within the thalamus, expressed moderately in the medial and lateral habenula. In the cerebellar cortex expressed in Purkinje cells and granule cells. Expressed at low levels in choroid plexus.

The protein resides in the cell membrane. The catalysed reaction is Na(+)(in) = Na(+)(out). It catalyses the reaction K(+)(in) = K(+)(out). The enzyme catalyses Li(+)(in) = Li(+)(out). Its activity is regulated as follows. Inhibited by the diuretic drug amiloride. Inhibited by gadolinium ions, the heterotrimer with ASIC3 being more sensitive. Zn(2+) potentiates the acid activation of ASIC2-containing homomeric and heteromeric channels. The snake venom mambalgin-1 and mambalgin-2 inhibit the homotrimers composed of ASIC1 and ASIC2 and have strong analgesic effects. Its function is as follows. Forms pH-gated trimeric sodium channels that act as postsynaptic excitatory sensors in the nervous system. Upon extracellular acidification, these channels generate rapid, transient inward currents that fully desensitize. Highly selective for sodium, they are permeable to other cations. By forming heterotrimeric channels with ASIC1, could contribute to synaptic plasticity, learning, and memory. Additionally, as acid sensors at nerve terminals, plays a role in mechanosensation and phototransduction. Has no pH-gated sodium channel activity per se but can associate with other ASICs to produce functional channels with specific properties. The sequence is that of Acid-sensing ion channel 2 from Rattus norvegicus (Rat).